The following is a 572-amino-acid chain: NADP-dependent malic enzyme (572 aa).

The residue at position 1 (methionine 1) is an N-acetylmethionine. Catalysis depends on tyrosine 102, which acts as the Proton donor. Arginine 155 contacts NADP(+). Residue lysine 173 is the Proton acceptor of the active site. A divalent metal cation contacts are provided by glutamate 245, aspartate 246, and aspartate 269. NADP(+) is bound by residues aspartate 269 and glycine 301–glutamate 318. Phosphoserine is present on serine 336.

The protein belongs to the malic enzymes family. As to quaternary structure, homotetramer. The cofactor is Mg(2+). Requires Mn(2+) as cofactor.

The protein resides in the cytoplasm. It carries out the reaction (S)-malate + NADP(+) = pyruvate + CO2 + NADPH. The catalysed reaction is oxaloacetate + H(+) = pyruvate + CO2. Its function is as follows. Catalyzes the oxidative decarboxylation of (S)-malate in the presence of NADP(+) and divalent metal ions, and decarboxylation of oxaloacetate. This chain is NADP-dependent malic enzyme (Me1), found in Mus musculus (Mouse).